The chain runs to 125 residues: MKHKQRWAGAICCFVLFIVVCLFLATHMKGAFRAAGHPEIGLLFFILPGAVASFFSQRREVLKPLFGAMLAAPCSMLIMRLFFSPTRSFWQELAWLLSAVFWCALGALCFLFISSLFKPQHRKNQ.

Residues 1–6 (MKHKQR) lie on the Cytoplasmic side of the membrane. A helical transmembrane segment spans residues 7 to 27 (WAGAICCFVLFIVVCLFLATH). Residues 28–34 (MKGAFRA) lie on the Periplasmic side of the membrane. Residues 35-55 (AGHPEIGLLFFILPGAVASFF) form a helical membrane-spanning segment. Over 56-64 (SQRREVLKP) the chain is Cytoplasmic. The helical transmembrane segment at 65 to 85 (LFGAMLAAPCSMLIMRLFFSP) threads the bilayer. Residues 86–92 (TRSFWQE) are Periplasmic-facing. A helical transmembrane segment spans residues 93 to 113 (LAWLLSAVFWCALGALCFLFI). The Cytoplasmic portion of the chain corresponds to 114–125 (SSLFKPQHRKNQ).

Its subcellular location is the cell inner membrane. This Escherichia coli O157:H7 protein is Inner membrane protein YbjM (ybjM).